Here is a 949-residue protein sequence, read N- to C-terminus: uncharacterized protein (949 aa).

The region spanning 64-170 is the Calponin-homology (CH) domain; the sequence is LCSVHEAKKW…YCLHALSYLL (107 aa).

It is found in the nucleus. This is an uncharacterized protein from Schizosaccharomyces pombe (strain 972 / ATCC 24843) (Fission yeast).